The following is a 211-amino-acid chain: Large ribosomal subunit protein uL4 (211 aa).

Residues 41 to 87 are disordered; the sequence is QAHARQGTASTLTRSEVRGGGRKPYKQKGTGRARQGSIRTPLRPGGG. Basic residues predominate over residues 60–71; the sequence is GGRKPYKQKGTG.

It belongs to the universal ribosomal protein uL4 family. Part of the 50S ribosomal subunit.

Its function is as follows. One of the primary rRNA binding proteins, this protein initially binds near the 5'-end of the 23S rRNA. It is important during the early stages of 50S assembly. It makes multiple contacts with different domains of the 23S rRNA in the assembled 50S subunit and ribosome. Functionally, forms part of the polypeptide exit tunnel. The polypeptide is Large ribosomal subunit protein uL4 (Parasynechococcus marenigrum (strain WH8102)).